A 151-amino-acid chain; its full sequence is 3-dehydroquinate dehydratase (151 aa).

Tyrosine 24 acts as the Proton acceptor in catalysis. Residues asparagine 76, histidine 82, and aspartate 89 each contribute to the substrate site. Histidine 102 (proton donor) is an active-site residue. Substrate contacts are provided by residues 103 to 104 and arginine 113; that span reads VS.

The protein belongs to the type-II 3-dehydroquinase family. As to quaternary structure, homododecamer.

The enzyme catalyses 3-dehydroquinate = 3-dehydroshikimate + H2O. The protein operates within metabolic intermediate biosynthesis; chorismate biosynthesis; chorismate from D-erythrose 4-phosphate and phosphoenolpyruvate: step 3/7. Functionally, catalyzes a trans-dehydration via an enolate intermediate. The chain is 3-dehydroquinate dehydratase from Afipia carboxidovorans (strain ATCC 49405 / DSM 1227 / KCTC 32145 / OM5) (Oligotropha carboxidovorans).